Reading from the N-terminus, the 347-residue chain is Tyrosine recombinase XerC 2 (347 aa).

One can recognise a Core-binding (CB) domain in the interval 17-108 (LVLTRYMEAH…PLKTWFKWLA (92 aa)). The Tyr recombinase domain occupies 125-313 (KLPKHLPRAI…SIEHLRAIHD (189 aa)). Catalysis depends on residues R170, K195, H265, R268, and H291. The active-site O-(3'-phospho-DNA)-tyrosine intermediate is Y300.

The protein belongs to the 'phage' integrase family.

It is found in the cytoplasm. In terms of biological role, site-specific tyrosine recombinase, which acts by catalyzing the cutting and rejoining of the recombining DNA molecules. The protein is Tyrosine recombinase XerC 2 of Ralstonia nicotianae (strain ATCC BAA-1114 / GMI1000) (Ralstonia solanacearum).